A 632-amino-acid chain; its full sequence is 2-hydroxyacyl-CoA lyase 2 (632 aa).

A helical membrane pass occupies residues Leu-13–Ala-33. Glu-98 contributes to the thiamine diphosphate binding site. Residues Asp-470 to Gly-550 form a thiamine pyrophosphate binding region. Residues Asp-521 and Asn-547 each contribute to the Mg(2+) site.

It belongs to the TPP enzyme family. The cofactor is Mg(2+). Thiamine diphosphate is required as a cofactor. Expressed in all tissues tested, with highest expression in heart, pancreas and placenta.

Its subcellular location is the endoplasmic reticulum membrane. It catalyses the reaction 2-hydroxyoctadecanoyl-CoA = heptadecanal + formyl-CoA. The catalysed reaction is (2R)-hydroxyhexadecanoyl-CoA = pentadecanal + formyl-CoA. In terms of biological role, endoplasmic reticulum 2-OH acyl-CoA lyase involved in the cleavage (C1 removal) reaction in the fatty acid alpha-oxydation in a thiamine pyrophosphate (TPP)-dependent manner. Involved in the phytosphingosine degradation pathway. This is 2-hydroxyacyl-CoA lyase 2 from Homo sapiens (Human).